A 208-amino-acid polypeptide reads, in one-letter code: Translation initiation factor 2 subunit beta (208 aa).

The TRAM domain occupies 145 to 203 (VIEEGETYELRIESVGSKGDGIAKVDKYLIFVPNTSKGEIVKAKVKKISGTLAFAEIVE).

The protein belongs to the eIF-2-beta/eIF-5 family. Heterotrimer composed of an alpha, a beta and a gamma chain.

In terms of biological role, eIF-2 functions in the early steps of protein synthesis by forming a ternary complex with GTP and initiator tRNA. This Methanothrix thermoacetophila (strain DSM 6194 / JCM 14653 / NBRC 101360 / PT) (Methanosaeta thermophila) protein is Translation initiation factor 2 subunit beta.